The sequence spans 412 residues: Clamp protein VP6 (412 aa).

The protein belongs to the reoviridae clamp protein family. As to quaternary structure, interacts with capsid proteins VP3, VP5 and VP7.

It localises to the virion. In terms of biological role, located at the interface of the incomplete T=13 outer capsid and the pseudo T=2 inner capsid, 120 VP6 subunits clamp and stabilizes the inner capsid shell. In Aquareovirus C (isolate Golden shiner/USA/GSRV/1977) (AQRV-C), this protein is Clamp protein VP6 (S8).